Consider the following 121-residue polypeptide: MHSEMLLHSVKADLHEKQEQIHQLKRVLHEIRQIKHDFSEAQHLIHRPHLNREAWRGTHAERFEDIREGMNKAYQQIKSDQVSGIIESIEGKIHSLEGDVYSIRRQITRIEHEIEKEKHKK.

In Bacillus subtilis (strain 168), this protein is Protein YxiB (yxiB).